The primary structure comprises 102 residues: A-type ATP synthase subunit F (102 aa).

It belongs to the V-ATPase F subunit family. Has multiple subunits with at least A(3), B(3), C, D, E, F, H, I and proteolipid K(x).

It localises to the cell membrane. In terms of biological role, component of the A-type ATP synthase that produces ATP from ADP in the presence of a proton gradient across the membrane. This Thermococcus kodakarensis (strain ATCC BAA-918 / JCM 12380 / KOD1) (Pyrococcus kodakaraensis (strain KOD1)) protein is A-type ATP synthase subunit F.